We begin with the raw amino-acid sequence, 331 residues long: Isopenicillin N synthase (331 aa).

Arg87, Tyr91, Ser183, and Tyr189 together coordinate isopenicillin N. 6 residues coordinate N-[(5S)-5-amino-5-carboxypentanoyl]-L-cysteinyl-D-valine: Arg87, Tyr91, Ser183, Tyr189, His214, and Asp216. One can recognise a Fe2OG dioxygenase domain in the interval 181 to 288; sequence LSSVVLIRYP…RQSLPFFVNL (108 aa). Fe(2+) contacts are provided by His214, Asp216, and His270. Arg279 contributes to the 2-oxoglutarate binding site. Ser281 contacts isopenicillin N. Ser281 contacts N-[(5S)-5-amino-5-carboxypentanoyl]-L-cysteinyl-D-valine.

It belongs to the iron/ascorbate-dependent oxidoreductase family. Requires Fe(2+) as cofactor.

The protein resides in the cytoplasm. Its subcellular location is the cytosol. The catalysed reaction is N-[(5S)-5-amino-5-carboxypentanoyl]-L-cysteinyl-D-valine + O2 = isopenicillin N + 2 H2O. It functions in the pathway antibiotic biosynthesis; penicillin G biosynthesis; penicillin G from L-alpha-aminoadipate and L-cysteine and L-valine: step 2/3. Functionally, isopenicillin N synthase; part of the gene cluster that mediates the biosynthesis of penicillin, the world's most important antibiotic. The first step of the pathway is performed by the trimodular NRPS acvA that produces the tripeptide N-[(5S)-5-amino-5-carboxypentanoyl]-L-cysteinyl-D-valine (LLD-ACV or ACV) via condensation of the 3 residues L-2-aminoadipate, L-cysteine and L-valine. The precursor amino acids for penicillin biosynthesis are withdrawn from the vacuolar amino acid pool by the MFS-type transporter penV. Each of the constituent amino acids of the tripeptide acv are activated as aminoacyl-adenylates with peptide bonds formed through the participation of amino acid thioester intermediates. The tripeptide ACV is then cyclized to form isopenicillin N (IPN) by the isopenicillin N synthase ipnA that forms the beta-lactam nucleus. Finally, the alpha-aminoadipyl side chain is exchanged for phenylacetic acid by the isopenicillin N acyltransferase aatA to yield penicillin. This step occurs in the peroxisomal matrix and the penM and paaT transporters are involved in the isopenicillin N and phenylacetic acid import into the peroxisome, respectively. The sequence is that of Isopenicillin N synthase from Penicillium rubens (strain ATCC 28089 / DSM 1075 / NRRL 1951 / Wisconsin 54-1255) (Penicillium chrysogenum).